The chain runs to 594 residues: ATP-dependent RNA helicase DBP9 (594 aa).

The short motif at 15–43 (SSFDSFHLDSRLSQAIRSIGFKHPTLIQS) is the Q motif element. Residues 47-229 (PLALQEKRDI…QQFCRSPAIL (183 aa)) enclose the Helicase ATP-binding domain. Residue 60–67 (ASTGSGKT) coordinates ATP. A DEAD box motif is present at residues 175–178 (DEVD). Positions 242–474 (KLIQYYVKVG…PYNFDIKQVE (233 aa)) constitute a Helicase C-terminal domain. Residues 562 to 594 (PFHKNSHRKNGRVVKKKGNVQRKGKSDPLKSFK) form a disordered region. Basic residues predominate over residues 565-584 (KNSHRKNGRVVKKKGNVQRK). The span at 585-594 (GKSDPLKSFK) shows a compositional bias: basic and acidic residues.

Belongs to the DEAD box helicase family. DDX56/DBP9 subfamily.

It is found in the nucleus. Its subcellular location is the nucleolus. It carries out the reaction ATP + H2O = ADP + phosphate + H(+). Functionally, ATP-binding RNA helicase involved in the biogenesis of 60S ribosomal subunits and is required for the normal formation of 25S and 5.8S rRNAs. The polypeptide is ATP-dependent RNA helicase DBP9 (DBP9) (Kluyveromyces lactis (strain ATCC 8585 / CBS 2359 / DSM 70799 / NBRC 1267 / NRRL Y-1140 / WM37) (Yeast)).